The following is a 790-amino-acid chain: Cadherin-18 (790 aa).

The signal sequence occupies residues M1–G24. Positions T25 to R53 are excised as a propeptide. N36 carries an N-linked (GlcNAc...) asparagine glycan. Cadherin domains follow at residues G54–F159, T160–F268, P269–F383, S384–P486, and E487–S608. The Extracellular segment spans residues G54–S608. N255 carries N-linked (GlcNAc...) asparagine glycosylation. Residues N455 and N536 are each glycosylated (N-linked (GlcNAc...) asparagine). Residues A609–L636 form a helical membrane-spanning segment. Residues R637 to T790 are Cytoplasmic-facing. S786 is subject to Phosphoserine.

The protein localises to the cell membrane. Functionally, cadherins are calcium-dependent cell adhesion proteins. They preferentially interact with themselves in a homophilic manner in connecting cells; cadherins may thus contribute to the sorting of heterogeneous cell types. This Homo sapiens (Human) protein is Cadherin-18 (CDH18).